We begin with the raw amino-acid sequence, 682 residues long: Tetratricopeptide repeat protein 39B (682 aa).

2 TPR repeats span residues 393–426 (SLVL…QEEW) and 626–659 (PFTL…YKDY).

It belongs to the TTC39 family.

Its function is as follows. Regulates high density lipoprotein (HDL) cholesterol metabolism by promoting the ubiquitination and degradation of the oxysterols receptors LXR (NR1H2 and NR1H3). This Homo sapiens (Human) protein is Tetratricopeptide repeat protein 39B.